Reading from the N-terminus, the 206-residue chain is Ribonuclease M5 (206 aa).

Residues 8-91 enclose the Toprim domain; the sequence is NEVIVVEGRD…AFLNRDEARP (84 aa). Mg(2+)-binding residues include E14, D60, and D62.

This sequence belongs to the ribonuclease M5 family. Requires Mg(2+) as cofactor.

Its subcellular location is the cytoplasm. It catalyses the reaction Endonucleolytic cleavage of RNA, removing 21 and 42 nucleotides, respectively, from the 5'- and 3'-termini of a 5S-rRNA precursor.. Required for correct processing of both the 5' and 3' ends of 5S rRNA precursor. Cleaves both sides of a double-stranded region yielding mature 5S rRNA in one step. The polypeptide is Ribonuclease M5 (Lactococcus lactis subsp. lactis (strain IL1403) (Streptococcus lactis)).